A 397-amino-acid polypeptide reads, in one-letter code: Elongation factor Tu (397 aa).

The tr-type G domain occupies 10-206 (KPHVNVGTIG…TMDTYFPQPE (197 aa)). The segment at 19-26 (GHVDHGKT) is G1. 19 to 26 (GHVDHGKT) contributes to the GTP binding site. Mg(2+) is bound at residue threonine 26. Positions 60-64 (GITIA) are G2. Positions 81–84 (DCPG) are G3. GTP-binding positions include 81–85 (DCPGH) and 136–139 (NKAD). The segment at 136–139 (NKAD) is G4. A G5 region spans residues 174–176 (SAL).

The protein belongs to the TRAFAC class translation factor GTPase superfamily. Classic translation factor GTPase family. EF-Tu/EF-1A subfamily. Monomer.

Its subcellular location is the cytoplasm. The enzyme catalyses GTP + H2O = GDP + phosphate + H(+). Its function is as follows. GTP hydrolase that promotes the GTP-dependent binding of aminoacyl-tRNA to the A-site of ribosomes during protein biosynthesis. The chain is Elongation factor Tu from Coxiella burnetii (strain Dugway 5J108-111).